The primary structure comprises 73 residues: MKVAEEYDKGVPMMLAPQMGAIDATVESIRYRAQLIARNQKLDSGVAATGMIGFAAGFLFSLLMVIVLPLLFW.

A helical transmembrane segment spans residues Ile-52 to Phe-72.

Belongs to the MtrF family. The complex is composed of 8 subunits; MtrA, MtrB, MtrC, MtrD, MtrE, MtrF, MtrG and MtrH.

It is found in the cell membrane. It catalyses the reaction 5-methyl-5,6,7,8-tetrahydromethanopterin + coenzyme M + 2 Na(+)(in) = 5,6,7,8-tetrahydromethanopterin + methyl-coenzyme M + 2 Na(+)(out). Its pathway is one-carbon metabolism; methanogenesis from CO(2); methyl-coenzyme M from 5,10-methylene-5,6,7,8-tetrahydromethanopterin: step 2/2. Its function is as follows. Part of a complex that catalyzes the formation of methyl-coenzyme M and tetrahydromethanopterin from coenzyme M and methyl-tetrahydromethanopterin. This is an energy-conserving, sodium-ion translocating step. This chain is Tetrahydromethanopterin S-methyltransferase subunit F, found in Methanosarcina barkeri (strain Fusaro / DSM 804).